The sequence spans 129 residues: ASCETTVTSGDTMTYSTRSISVPASCAEFTVNFEHKGHMPKTGMGHNWVLAKSADVGDVAKEGAHAGADNNFVTPGDKRVIAFTPIIGGGEKTSVKFKVSALSKDEAYTYFCSYPGHFSMMRGTLKLEE.

A Plastocyanin-like domain is found at 1-129; that stretch reads ASCETTVTSG…MMRGTLKLEE (129 aa). Residues Cys-3 and Cys-26 are joined by a disulfide bond. Residues His-46, Cys-112, His-117, and Met-121 each contribute to the Cu cation site.

The protein resides in the periplasm. Functionally, this methylothroph organism uses azurin in the oxidation of methylamine. Iso-2 is probably the acceptor of electrons from methylamine dehydrogenase. This is Azurin iso-2 from Methylomonas sp. (strain J).